The primary structure comprises 540 residues: Probable G-protein coupled receptor 75 (540 aa).

Residues 1–15 are compositionally biased toward polar residues; it reads MNSTGHLQDAPNATS. The tract at residues 1-27 is disordered; sequence MNSTGHLQDAPNATSLHVPHSQEGNST. Residues 1–46 are Extracellular-facing; it reads MNSTGHLQDAPNATSLHVPHSQEGNSTSLQEGLQDLIHTATLVTCT. 3 N-linked (GlcNAc...) asparagine glycosylation sites follow: Asn-2, Asn-12, and Asn-25. Residues 47 to 67 form a helical membrane-spanning segment; sequence FLLAVIFCLGSYGNFIVFLSF. The Cytoplasmic segment spans residues 68–86; it reads FDPAFRKFRTNFDFMILNL. The helical transmembrane segment at 87–107 threads the bilayer; sequence SFCDLFICGVTAPMFTFVLFF. Residues 108–120 lie on the Extracellular side of the membrane; that stretch reads SSASSIPDAFCFT. Residues 121 to 141 traverse the membrane as a helical segment; it reads FHLTSSGFIIMSLKTVAVIAL. Over 142 to 160 the chain is Cytoplasmic; the sequence is HRLRMVLGKQPNRTASFPC. A helical membrane pass occupies residues 161–181; the sequence is TVLLTLLLWATSFTLATLATL. Topologically, residues 182–205 are extracellular; it reads KTSKSHLCLPMSSLIAGKGKAILS. A helical transmembrane segment spans residues 206-226; sequence LYVVDFTFCVAVVSVSYIMIA. The Cytoplasmic portion of the chain corresponds to 227–318; that stretch reads QTLRKNAQVR…INLSTAKDSK (92 aa). A helical membrane pass occupies residues 319–339; the sequence is AVVTCVIIVLSVLVCCLPLGI. Topologically, residues 340-350 are extracellular; that stretch reads SLVQVVLSSNG. Residues 351–371 form a helical membrane-spanning segment; that stretch reads SFILYQFELFGFTLIFFKSGL. The Cytoplasmic segment spans residues 372–540; that stretch reads NPFIYSRNSA…SAKQIPVPSV (169 aa).

It belongs to the G-protein coupled receptor 1 family. In terms of tissue distribution, expressed at high levels in brain and spinal cord and at detectable levels in retinal pigment epithelium. In situ hybridization of adult eye sections localized transcripts only to the perivascular cells, surrounding retinal arterioles, in the ganglion cell/nerve fiber layer. Also expressed by islet cells (at protein level).

The protein resides in the cell membrane. Functionally, g protein-coupled receptor that is activated by the chemokine CCL5/RANTES. Probably coupled to heterotrimeric Gq proteins, it stimulates inositol trisphosphate production and calcium mobilization upon activation. Together with CCL5/RANTES, may play a role in neuron survival through activation of a downstream signaling pathway involving the PI3, Akt and MAP kinases. CCL5/RANTES may also regulate insulin secretion by pancreatic islet cells through activation of this receptor. This Homo sapiens (Human) protein is Probable G-protein coupled receptor 75 (GPR75).